The chain runs to 50 residues: Small ribosomal subunit protein uS14 (50 aa).

The Zn(2+) site is built by C15, C18, C33, and C36.

Belongs to the universal ribosomal protein uS14 family. Zinc-binding uS14 subfamily. Part of the 30S ribosomal subunit. Zn(2+) is required as a cofactor.

Binds 16S rRNA, required for the assembly of 30S particles. The polypeptide is Small ribosomal subunit protein uS14 (Methanosarcina barkeri (strain Fusaro / DSM 804)).